The chain runs to 621 residues: SH2B adapter protein 2 (621 aa).

The residue at position 47 (Y47) is a Phosphotyrosine. S130 is modified (phosphoserine). The tract at residues 144-165 (RASPEPEGGATPKTTEPVSEPR) is disordered. A PH domain is found at 186–299 (DIQREGALRF…WVADIQGCVD (114 aa)). S303 bears the Phosphoserine mark. One can recognise an SH2 domain in the interval 409–507 (WFHGTLSRVK…SADITLRSYV (99 aa)). Disordered stretches follow at residues 507 to 528 (VRAQGPPPDPGPAPNTAAPVPA) and 548 to 609 (PPTS…ATLG). A compositionally biased stretch (low complexity) spans 552–570 (PSNGAGASSSSGSSSSATS). The residue at position 597 (S597) is a Phosphoserine. Y618 carries the phosphotyrosine modification.

This sequence belongs to the SH2B adapter family. In terms of assembly, homodimer. Interacts with KIT/c-KIT, SHC1, EPOR, PDGFR, VAV1 and VAV3. Interacts (via N-terminal region) with SHC1. Interacts (via the phosphorylated C-terminus) with GRB2. Interacts (via its SH2 domain) with EPOR, INSR and KIT. Interacts with GRB2 after B-cell antigen receptor stimulation. Interacts (via PH domain) with VAV3. Interacts with NTRK1, NTRK2 and NTRK3 (phosphorylated); after stimulation of the receptor by its extracellular ligand and subsequent autophosphorylation of the receptor. Binds INSR, GRB2, ASB6 and CAP. Insulin stimulation leads to dissociation of CAP. Binds CBS only when SH2B2/APS has become phosphorylated. INSR binding does not depend on the phosphorylation of SH2B2/APS. In terms of processing, phosphorylated on a tyrosine residue by NTRK1, NTRK2, NTRK3 and INSR after stimulation of the receptor by its extracellular ligand. Tyrosine phosphorylated by JAK2, KIT and other kinases activated by B-cell receptor in response to stimulation with cytokines, IL3, IL5, PDGF, IGF1, IGF2, CSF2/GM-CSF and cross-linking of the B-cell receptor complex. In terms of tissue distribution, detected in embryonic brain, spinal cord and cortical neurons.

The protein resides in the cytoplasm. The protein localises to the membrane. Functionally, adapter protein for several members of the tyrosine kinase receptor family. Involved in multiple signaling pathways. Binds to EPOR and suppresses EPO-induced STAT5 activation, possibly through a masking effect on STAT5 docking sites in EPOR. Suppresses PDGF-induced mitogenesis. Involved in stimulation of glucose uptake by insulin. Involved in coupling from immunoreceptor to Ras signaling. Acts as a negative regulator of cytokine signaling in collaboration with CBL. Induces cytoskeletal reorganization and neurite outgrowth in cultured neurons. The sequence is that of SH2B adapter protein 2 (Sh2b2) from Rattus norvegicus (Rat).